We begin with the raw amino-acid sequence, 480 residues long: Protein nucleotidyltransferase YdiU (480 aa).

The ATP site is built by Gly86, Gly88, Arg89, Lys109, Asp121, Gly122, Arg172, and Arg179. Catalysis depends on Asp248, which acts as the Proton acceptor. The Mg(2+) site is built by Asn249 and Asp258. Asp258 provides a ligand contact to ATP.

It belongs to the SELO family. Mg(2+) serves as cofactor. Mn(2+) is required as a cofactor.

It carries out the reaction L-seryl-[protein] + ATP = 3-O-(5'-adenylyl)-L-seryl-[protein] + diphosphate. It catalyses the reaction L-threonyl-[protein] + ATP = 3-O-(5'-adenylyl)-L-threonyl-[protein] + diphosphate. The catalysed reaction is L-tyrosyl-[protein] + ATP = O-(5'-adenylyl)-L-tyrosyl-[protein] + diphosphate. The enzyme catalyses L-histidyl-[protein] + UTP = N(tele)-(5'-uridylyl)-L-histidyl-[protein] + diphosphate. It carries out the reaction L-seryl-[protein] + UTP = O-(5'-uridylyl)-L-seryl-[protein] + diphosphate. It catalyses the reaction L-tyrosyl-[protein] + UTP = O-(5'-uridylyl)-L-tyrosyl-[protein] + diphosphate. In terms of biological role, nucleotidyltransferase involved in the post-translational modification of proteins. It can catalyze the addition of adenosine monophosphate (AMP) or uridine monophosphate (UMP) to a protein, resulting in modifications known as AMPylation and UMPylation. The chain is Protein nucleotidyltransferase YdiU from Klebsiella pneumoniae (strain 342).